The primary structure comprises 699 residues: Dymeclin (699 aa).

Residue G2 is the site of N-myristoyl glycine attachment. At S346 the chain carries Phosphoserine.

It belongs to the dymeclin family.

The polypeptide is Dymeclin (Drosophila melanogaster (Fruit fly)).